We begin with the raw amino-acid sequence, 282 residues long: tRNA pseudouridine synthase B (282 aa).

Asp-39 (nucleophile) is an active-site residue.

This sequence belongs to the pseudouridine synthase TruB family. Type 1 subfamily.

The catalysed reaction is uridine(55) in tRNA = pseudouridine(55) in tRNA. Functionally, responsible for synthesis of pseudouridine from uracil-55 in the psi GC loop of transfer RNAs. The chain is tRNA pseudouridine synthase B from Borreliella burgdorferi (strain ATCC 35210 / DSM 4680 / CIP 102532 / B31) (Borrelia burgdorferi).